The chain runs to 197 residues: Phosphoheptose isomerase (197 aa).

An SIS domain is found at 36–197; sequence MVNALLNEGK…IDSQLFGSEE (162 aa). 51-53 serves as a coordination point for substrate; the sequence is NGG. His-60 and Glu-64 together coordinate Zn(2+). Substrate is bound by residues Glu-64, 93 to 94, 119 to 121, Ser-124, and Gln-174; these read ND and STS. Gln-174 and His-182 together coordinate Zn(2+).

It belongs to the SIS family. GmhA subfamily. Homotetramer. The cofactor is Zn(2+).

It localises to the cytoplasm. The enzyme catalyses 2 D-sedoheptulose 7-phosphate = D-glycero-alpha-D-manno-heptose 7-phosphate + D-glycero-beta-D-manno-heptose 7-phosphate. It participates in carbohydrate biosynthesis; D-glycero-D-manno-heptose 7-phosphate biosynthesis; D-glycero-alpha-D-manno-heptose 7-phosphate and D-glycero-beta-D-manno-heptose 7-phosphate from sedoheptulose 7-phosphate: step 1/1. Catalyzes the isomerization of sedoheptulose 7-phosphate in D-glycero-D-manno-heptose 7-phosphate. This chain is Phosphoheptose isomerase, found in Pseudomonas fluorescens (strain SBW25).